Reading from the N-terminus, the 288-residue chain is Formamidopyrimidine-DNA glycosylase (288 aa).

Pro-2 functions as the Schiff-base intermediate with DNA in the catalytic mechanism. The active-site Proton donor is Glu-3. Lys-58 serves as the catalytic Proton donor; for beta-elimination activity. Residues His-101, Arg-124, and Arg-169 each coordinate DNA. Residues 254 to 288 (LVYDRAGLPCRVCGTPIRQIVQGQRSTFYCPACQR) form an FPG-type zinc finger. The active-site Proton donor; for delta-elimination activity is Arg-278.

Belongs to the FPG family. In terms of assembly, monomer. It depends on Zn(2+) as a cofactor.

The enzyme catalyses Hydrolysis of DNA containing ring-opened 7-methylguanine residues, releasing 2,6-diamino-4-hydroxy-5-(N-methyl)formamidopyrimidine.. It carries out the reaction 2'-deoxyribonucleotide-(2'-deoxyribose 5'-phosphate)-2'-deoxyribonucleotide-DNA = a 3'-end 2'-deoxyribonucleotide-(2,3-dehydro-2,3-deoxyribose 5'-phosphate)-DNA + a 5'-end 5'-phospho-2'-deoxyribonucleoside-DNA + H(+). Functionally, involved in base excision repair of DNA damaged by oxidation or by mutagenic agents. Acts as a DNA glycosylase that recognizes and removes damaged bases. Has a preference for oxidized purines, such as 7,8-dihydro-8-oxoguanine (8-oxoG). Has AP (apurinic/apyrimidinic) lyase activity and introduces nicks in the DNA strand. Cleaves the DNA backbone by beta-delta elimination to generate a single-strand break at the site of the removed base with both 3'- and 5'-phosphates. This is Formamidopyrimidine-DNA glycosylase from Ralstonia nicotianae (strain ATCC BAA-1114 / GMI1000) (Ralstonia solanacearum).